The chain runs to 77 residues: Small, acid-soluble spore protein Tlp (77 aa).

Belongs to the Tlp family.

The protein resides in the spore core. This Geobacillus sp. (strain WCH70) protein is Small, acid-soluble spore protein Tlp.